Consider the following 276-residue polypeptide: Large ribosomal subunit protein uL2 (276 aa).

The interval 225–276 is disordered; that stretch reads MNPVDHPHGGGEGRAPVGRKHPVTPWGKPAMGAKTRKKRKLSDKLIVKPRNK. Positions 258–276 are enriched in basic residues; the sequence is KTRKKRKLSDKLIVKPRNK.

The protein belongs to the universal ribosomal protein uL2 family. Part of the 50S ribosomal subunit. Forms a bridge to the 30S subunit in the 70S ribosome.

Functionally, one of the primary rRNA binding proteins. Required for association of the 30S and 50S subunits to form the 70S ribosome, for tRNA binding and peptide bond formation. It has been suggested to have peptidyltransferase activity; this is somewhat controversial. Makes several contacts with the 16S rRNA in the 70S ribosome. This is Large ribosomal subunit protein uL2 from Moorella thermoacetica (strain ATCC 39073 / JCM 9320).